The following is a 483-amino-acid chain: Glutamyl-tRNA(Gln) amidotransferase subunit A (483 aa).

Active-site charge relay system residues include K76 and S151. The active-site Acyl-ester intermediate is the S175.

The protein belongs to the amidase family. GatA subfamily. As to quaternary structure, heterotrimer of A, B and C subunits.

The enzyme catalyses L-glutamyl-tRNA(Gln) + L-glutamine + ATP + H2O = L-glutaminyl-tRNA(Gln) + L-glutamate + ADP + phosphate + H(+). Functionally, allows the formation of correctly charged Gln-tRNA(Gln) through the transamidation of misacylated Glu-tRNA(Gln) in organisms which lack glutaminyl-tRNA synthetase. The reaction takes place in the presence of glutamine and ATP through an activated gamma-phospho-Glu-tRNA(Gln). This Pseudomonas putida (strain GB-1) protein is Glutamyl-tRNA(Gln) amidotransferase subunit A.